A 121-amino-acid chain; its full sequence is Large ribosomal subunit protein uL18 (121 aa).

This sequence belongs to the universal ribosomal protein uL18 family. In terms of assembly, part of the 50S ribosomal subunit; part of the 5S rRNA/L5/L18/L25 subcomplex. Contacts the 5S and 23S rRNAs.

Its function is as follows. This is one of the proteins that bind and probably mediate the attachment of the 5S RNA into the large ribosomal subunit, where it forms part of the central protuberance. The protein is Large ribosomal subunit protein uL18 of Roseiflexus castenholzii (strain DSM 13941 / HLO8).